The sequence spans 414 residues: Histidine--tRNA ligase (414 aa).

Belongs to the class-II aminoacyl-tRNA synthetase family. As to quaternary structure, homodimer.

It localises to the cytoplasm. The enzyme catalyses tRNA(His) + L-histidine + ATP = L-histidyl-tRNA(His) + AMP + diphosphate + H(+). The polypeptide is Histidine--tRNA ligase (Solibacter usitatus (strain Ellin6076)).